Here is a 326-residue protein sequence, read N- to C-terminus: Pyruvate dehydrogenase E1 component subunit alpha (326 aa).

In terms of assembly, heterodimer of an alpha and a beta chain. The cofactor is thiamine diphosphate.

The enzyme catalyses N(6)-[(R)-lipoyl]-L-lysyl-[protein] + pyruvate + H(+) = N(6)-[(R)-S(8)-acetyldihydrolipoyl]-L-lysyl-[protein] + CO2. Functionally, the pyruvate dehydrogenase complex catalyzes the overall conversion of pyruvate to acetyl-CoA and CO(2). It contains multiple copies of three enzymatic components: pyruvate dehydrogenase (E1), dihydrolipoamide acetyltransferase (E2) and lipoamide dehydrogenase (E3). This chain is Pyruvate dehydrogenase E1 component subunit alpha (pdhA), found in Rickettsia prowazekii (strain Madrid E).